We begin with the raw amino-acid sequence, 316 residues long: 4-hydroxy-3-methylbut-2-enyl diphosphate reductase (316 aa).

Cys12 lines the [4Fe-4S] cluster pocket. (2E)-4-hydroxy-3-methylbut-2-enyl diphosphate contacts are provided by His41 and His74. Residues His41 and His74 each contribute to the dimethylallyl diphosphate site. 2 residues coordinate isopentenyl diphosphate: His41 and His74. Position 96 (Cys96) interacts with [4Fe-4S] cluster. His124 contacts (2E)-4-hydroxy-3-methylbut-2-enyl diphosphate. His124 is a binding site for dimethylallyl diphosphate. His124 is an isopentenyl diphosphate binding site. Residue Glu126 is the Proton donor of the active site. (2E)-4-hydroxy-3-methylbut-2-enyl diphosphate is bound at residue Thr168. Cys198 is a [4Fe-4S] cluster binding site. (2E)-4-hydroxy-3-methylbut-2-enyl diphosphate is bound by residues Ser226, Ser227, Asn228, and Ser270. Residues Ser226, Ser227, Asn228, and Ser270 each coordinate dimethylallyl diphosphate. Residues Ser226, Ser227, Asn228, and Ser270 each contribute to the isopentenyl diphosphate site.

The protein belongs to the IspH family. The cofactor is [4Fe-4S] cluster.

The catalysed reaction is isopentenyl diphosphate + 2 oxidized [2Fe-2S]-[ferredoxin] + H2O = (2E)-4-hydroxy-3-methylbut-2-enyl diphosphate + 2 reduced [2Fe-2S]-[ferredoxin] + 2 H(+). The enzyme catalyses dimethylallyl diphosphate + 2 oxidized [2Fe-2S]-[ferredoxin] + H2O = (2E)-4-hydroxy-3-methylbut-2-enyl diphosphate + 2 reduced [2Fe-2S]-[ferredoxin] + 2 H(+). It functions in the pathway isoprenoid biosynthesis; dimethylallyl diphosphate biosynthesis; dimethylallyl diphosphate from (2E)-4-hydroxy-3-methylbutenyl diphosphate: step 1/1. Its pathway is isoprenoid biosynthesis; isopentenyl diphosphate biosynthesis via DXP pathway; isopentenyl diphosphate from 1-deoxy-D-xylulose 5-phosphate: step 6/6. Its function is as follows. Catalyzes the conversion of 1-hydroxy-2-methyl-2-(E)-butenyl 4-diphosphate (HMBPP) into a mixture of isopentenyl diphosphate (IPP) and dimethylallyl diphosphate (DMAPP). Acts in the terminal step of the DOXP/MEP pathway for isoprenoid precursor biosynthesis. This chain is 4-hydroxy-3-methylbut-2-enyl diphosphate reductase, found in Acinetobacter baumannii (strain AB307-0294).